The chain runs to 247 residues: Chaperone protein AfaB (247 aa).

The N-terminal stretch at 1-29 (MKMRAVAVFTGMLTGVLSVAGLLSAGAYA) is a signal peptide.

This sequence belongs to the periplasmic pilus chaperone family.

It is found in the periplasm. Its function is as follows. Involved in the biogenesis of the AFA-III afimbrial adhesin. In Escherichia coli, this protein is Chaperone protein AfaB (afaB).